The sequence spans 202 residues: LexA repressor (202 aa).

Residues serine 123 and lysine 159 each act as for autocatalytic cleavage activity in the active site.

The protein belongs to the peptidase S24 family. As to quaternary structure, homodimer.

It carries out the reaction Hydrolysis of Ala-|-Gly bond in repressor LexA.. Binds the consensus sequence 5'-TGTTC-N(4)-GAACA-3'; some genes have a tandem consensus sequence, at high concentrations their binding is cooperative. Binds to the promoters of a number of genes, including dinB, imuA, lexA, recA, recQ, splB and uvrA. Represses a number of genes involved in the response to DNA damage (SOS response). In the presence of single-stranded DNA, RecA interacts with LexA causing an autocatalytic cleavage which disrupts the DNA-binding part of LexA, leading to derepression of the SOS regulon and eventually DNA repair. The chain is LexA repressor from Verrucomicrobium spinosum (strain ATCC 43997 / DSM 4136 / JCM 18804 / IFAM 1439).